Reading from the N-terminus, the 453-residue chain is Tubulin alpha-1 chain (453 aa).

7 residues coordinate GTP: Gln11, Glu71, Gly144, Thr145, Thr179, Asn206, and Asn228. A Mg(2+)-binding site is contributed by Glu71. Glu254 is an active-site residue. The interval 433–453 (EEVGAETADGDGEEEEFGEEY) is disordered.

Belongs to the tubulin family. As to quaternary structure, dimer of alpha and beta chains. A typical microtubule is a hollow water-filled tube with an outer diameter of 25 nm and an inner diameter of 15 nM. Alpha-beta heterodimers associate head-to-tail to form protofilaments running lengthwise along the microtubule wall with the beta-tubulin subunit facing the microtubule plus end conferring a structural polarity. Microtubules usually have 13 protofilaments but different protofilament numbers can be found in some organisms and specialized cells. Mg(2+) is required as a cofactor. Post-translationally, undergoes a tyrosination/detyrosination cycle, the cyclic removal and re-addition of a C-terminal tyrosine residue by the enzymes tubulin tyrosine carboxypeptidase (TTCP) and tubulin tyrosine ligase (TTL), respectively.

The protein resides in the cytoplasm. It localises to the cytoskeleton. The enzyme catalyses GTP + H2O = GDP + phosphate + H(+). Functionally, tubulin is the major constituent of microtubules, a cylinder consisting of laterally associated linear protofilaments composed of alpha- and beta-tubulin heterodimers. Microtubules grow by the addition of GTP-tubulin dimers to the microtubule end, where a stabilizing cap forms. Below the cap, tubulin dimers are in GDP-bound state, owing to GTPase activity of alpha-tubulin. This Pelvetia fastigiata (Brown alga) protein is Tubulin alpha-1 chain (TUBA1).